Here is a 227-residue protein sequence, read N- to C-terminus: Pro-thyrotropin-releasing hormone-A (227 aa).

A signal peptide spans 1 to 15 (MVSVWWLLLLGTTVS). At Q75 the chain carries Pyrrolidone carboxylic acid. P77 is modified (proline amide). Q89 carries the pyrrolidone carboxylic acid modification. P91 carries the post-translational modification Proline amide. Q107 carries the pyrrolidone carboxylic acid modification. Disordered stretches follow at residues 107–128 (QHPG…KREE) and 151–204 (RRQH…PCEG). P109 carries the post-translational modification Proline amide. The span at 112 to 128 (RFVDDVEKRQHPGKREE) shows a compositional bias: basic and acidic residues. Q121 carries the pyrrolidone carboxylic acid modification. P123 carries the proline amide modification. Q153 carries the pyrrolidone carboxylic acid modification. P155 bears the Proline amide mark. Q168 is subject to Pyrrolidone carboxylic acid. P170 carries the post-translational modification Proline amide. A compositionally biased stretch (basic and acidic residues) spans 184–201 (ENSKEVGKRQHPGKRYDP). A Pyrrolidone carboxylic acid modification is found at Q193. Proline amide is present on P195.

Belongs to the TRH family.

It localises to the secreted. This chain is Pro-thyrotropin-releasing hormone-A (trh-a), found in Xenopus laevis (African clawed frog).